Consider the following 515-residue polypeptide: Sphingolipid 10-desaturase (515 aa).

A helical membrane pass occupies residues 3-23; sequence AVWALLWALQLGTLVGCALVL. The Cytochrome b5 heme-binding domain occupies 46–113; it reads AKPISDQKAA…DISFVFRVMH (68 aa). Residues histidine 90 and histidine 113 each coordinate heme. A helical transmembrane segment spans residues 198 to 218; the sequence is TWLLWNTAVLISIIALSVISM. The Histidine box-1 motif lies at 245 to 249; sequence HDAEH. The helical transmembrane segment at 258-278 threads the bilayer; the sequence is LNDILGWIYGTVFLGVNGAWW. Residues 281-286 carry the Histidine box-2 motif; the sequence is EHREHH. The next 3 helical transmembrane spans lie at 322–342, 359–379, and 382–402; these read IIHFLTNFQHILFLPIIFIVG, PWTILGNVCHILLHYAILSQT, and PIPVYIIGSLWQAILSLQLLG. Residues 447 to 451 carry the Histidine box-3 motif; that stretch reads HYSHH.

It belongs to the fatty acid desaturase type 1 family. The cofactor is Fe(2+).

Its subcellular location is the membrane. It carries out the reaction a (4E,8E)-4-sphinga-4,8-dienine ceramide + 2 Fe(II)-[cytochrome b5] + O2 + 2 H(+) = an N-acyl-(4E,8E,10E)-sphingatrienine + 2 Fe(III)-[cytochrome b5] + 2 H2O. Its pathway is lipid metabolism; sphingolipid metabolism. Functionally, fatty acid desaturase that catalyzes the introduction of the third double bond at the Delta(10) position in d18:3Delta4,8,10 triunsaturated sphingolipid long fatty acid chains. The cytochrome b5 domain probably acts as the direct electron donor to the active site of the desaturase. The protein is Sphingolipid 10-desaturase of Thalassiosira pseudonana (Marine diatom).